The following is a 227-amino-acid chain: 7-cyano-7-deazaguanine synthase (227 aa).

Leu-9 to Leu-19 is an ATP binding site. Cys-189, Cys-199, Cys-202, and Cys-205 together coordinate Zn(2+).

Belongs to the QueC family. The cofactor is Zn(2+).

The enzyme catalyses 7-carboxy-7-deazaguanine + NH4(+) + ATP = 7-cyano-7-deazaguanine + ADP + phosphate + H2O + H(+). It participates in purine metabolism; 7-cyano-7-deazaguanine biosynthesis. Catalyzes the ATP-dependent conversion of 7-carboxy-7-deazaguanine (CDG) to 7-cyano-7-deazaguanine (preQ(0)). The sequence is that of 7-cyano-7-deazaguanine synthase from Cupriavidus taiwanensis (strain DSM 17343 / BCRC 17206 / CCUG 44338 / CIP 107171 / LMG 19424 / R1) (Ralstonia taiwanensis (strain LMG 19424)).